We begin with the raw amino-acid sequence, 423 residues long: Adenylosuccinate synthetase (423 aa).

GTP is bound by residues 12–18 (GDEGKGK) and 40–42 (GHT). D13 serves as the catalytic Proton acceptor. Mg(2+) contacts are provided by D13 and G40. IMP contacts are provided by residues 13 to 16 (DEGK), 38 to 41 (NAGH), T129, R143, Q224, T239, and R303. The Proton donor role is filled by H41. Substrate is bound at residue 299–305 (SVTGRQR). Residues R305, 331–333 (KGD), and 412–414 (SVG) each bind GTP.

Belongs to the adenylosuccinate synthetase family. Homodimer. Mg(2+) is required as a cofactor.

Its subcellular location is the cytoplasm. It catalyses the reaction IMP + L-aspartate + GTP = N(6)-(1,2-dicarboxyethyl)-AMP + GDP + phosphate + 2 H(+). It functions in the pathway purine metabolism; AMP biosynthesis via de novo pathway; AMP from IMP: step 1/2. Functionally, plays an important role in the de novo pathway of purine nucleotide biosynthesis. Catalyzes the first committed step in the biosynthesis of AMP from IMP. The sequence is that of Adenylosuccinate synthetase from Flavobacterium psychrophilum (strain ATCC 49511 / DSM 21280 / CIP 103535 / JIP02/86).